A 179-amino-acid polypeptide reads, in one-letter code: Cytoglobin-2 (179 aa).

The segment covering 1-11 has biased composition (acidic residues); that stretch reads MEKEREDEETE. Residues 1-20 are disordered; the sequence is MEKEREDEETEGRERPEPLT. One can recognise a Globin domain in the interval 18-167; sequence PLTDVERGII…LYWHITGAYT (150 aa). Positions 81 and 113 each coordinate heme b.

This sequence belongs to the globin family. Monomeric. Expressed in all tissues examined, with highest levels in brain and eye, and considerably lower levels in skin, gut, heart, gill, liver and muscle.

It is found in the cytoplasm. Its subcellular location is the nucleus. It catalyses the reaction Fe(II)-heme b-[protein] + nitric oxide + O2 = Fe(III)-heme b-[protein] + nitrate. The catalysed reaction is Fe(III)-heme b-[protein] + nitric oxide + H2O = Fe(II)-heme b-[protein] + nitrite + 2 H(+). It carries out the reaction 2 superoxide + 2 H(+) = H2O2 + O2. The enzyme catalyses H2O2 + AH2 = A + 2 H2O. Functionally, probable multifunctional globin with a hexacoordinated heme iron required for the catalysis of various reactions depending on redox condition of the cell as well as oxygen availability. Has a nitric oxide dioxygenase (NOD) activity and is most probably involved in cell-mediated and oxygen-dependent nitric oxide consumption. Under normoxic conditions functions as a nitric oxide dioxygenase (NOD) but under hypoxic conditions the globin may switch its function to that of a nitrite (NO2) reductase (NiR), generating nitric oxide. Could also have peroxidase and superoxide dismutase activities, detoxifying reactive oxygen species and protecting cells against oxidative stress. Also binds dioxygen with low affinity and could function as an oxygen sensor but has probably no function as a respiratory oxygen carrier. This Danio rerio (Zebrafish) protein is Cytoglobin-2.